The primary structure comprises 564 residues: Myb-like protein F (564 aa).

Disordered stretches follow at residues 22–107 (YNNS…NYNN), 122–203 (NYNN…YNGG), and 310–410 (NYNN…TKKY). Residues 23–79 (NNSNHYNDNNDNNNNNNNNNNDNNNNDNNNNNNNNNNSIINNESDNESNGTSNNYND) are compositionally biased toward low complexity. Residues 82–96 (NDNHHHHQDDEHHGN) are compositionally biased toward basic and acidic residues. 4 stretches are compositionally biased toward low complexity: residues 97–107 (GNDNDNENYNN), 135–173 (EINS…NNSK), 193–203 (NNNNNNKYNGG), and 310–364 (NYNN…NSSN). Positions 365–409 (KEYKEKEYKEKEYKEKEFKESKDSSLKRKSSSDDDGDDSGRDTKK) are enriched in basic and acidic residues. The 53-residue stretch at 412–464 (PGRTVWTLEEEELYKEVFNHYGKNWKKIKTHFPDKSKSQVTSHGQYLIKINKL) folds into the SANT domain. Positions 519-556 (NNENTNDNNNHNNNNYNDNNNNSNNNNNFNNSNNNNTN) are enriched in low complexity. Positions 519-564 (NNENTNDNNNHNNNNYNDNNNNSNNNNNFNNSNNNNTNKFIDEDDD) are disordered.

Its subcellular location is the nucleus. This Dictyostelium discoideum (Social amoeba) protein is Myb-like protein F (mybF).